Consider the following 834-residue polypeptide: Taste receptor type 1 member 2 (834 aa).

An N-terminal signal peptide occupies residues 1–19 (MGPRARTVCFLFFLLWVLA). Topologically, residues 20-561 (ELAENSDFHL…SFLEWHEAAT (542 aa)) are extracellular. N-linked (GlcNAc...) asparagine glycans are attached at residues Asn-84, Asn-292, Asn-312, Asn-363, Asn-423, Asn-482, and Asn-522. A helical membrane pass occupies residues 562 to 582 (IAVALLAALGFLXXXXXXXXX). Over 583 to 597 (XXXXXXPMVRSAGGP) the chain is Cytoplasmic. A helical transmembrane segment spans residues 598–618 (MCFLMLTLLLVAYMVVPVYVG). The Extracellular segment spans residues 619–630 (PPKVTTCLCRQA). The chain crosses the membrane as a helical span at residues 631-651 (LFPVCFTICISCITMRSFQIV). Topologically, residues 652-676 (CVFKMASRFPRAYSYWVRYQGSYVS) are cytoplasmic. Residues 677 to 697 (VAFITALKVVTVVISLLATGL) form a helical membrane-spanning segment. The Extracellular segment spans residues 698–722 (NPTTRADTDDPKIMIISCNPNYRNS). The chain crosses the membrane as a helical span at residues 723–743 (LLFNTSLDLLLSVVGFSFAYM). Residues 744-755 (GKELPTNYNEAK) are Cytoplasmic-facing. The chain crosses the membrane as a helical span at residues 756–776 (FITFSMTFYFTSSVSLCTFMS). Residues 777–779 (VYD) lie on the Extracellular side of the membrane. Residues 780–800 (GVLVTIVDLLVTVFNLLAISL) form a helical membrane-spanning segment. Residues 801-834 (GYFGPKCYMILFYPERNTPAYFNSMIQGYTMRRD) lie on the Cytoplasmic side of the membrane.

It belongs to the G-protein coupled receptor 3 family. TAS1R subfamily. Forms heterodimers with TAS1R3.

The protein resides in the cell membrane. In terms of biological role, putative taste receptor. TAS1R2/TAS1R3 recognizes diverse natural and synthetic sweeteners. The protein is Taste receptor type 1 member 2 (TAS1R2) of Cebuella pygmaea (Pygmy marmoset).